A 138-amino-acid chain; its full sequence is uncharacterized protein (138 aa).

This is an uncharacterized protein from Archaeoglobus fulgidus (strain ATCC 49558 / DSM 4304 / JCM 9628 / NBRC 100126 / VC-16).